Here is a 359-residue protein sequence, read N- to C-terminus: 4-galactosyl-N-acetylglucosaminide 3-alpha-L-fucosyltransferase 9 (359 aa).

At 1-11 (MTSTSKGILRP) the chain is on the cytoplasmic side. Residues 12–32 (FLIVCIILGCFMACLLIYIKP) traverse the membrane as a helical; Signal-anchor for type II membrane protein segment. The Lumenal portion of the chain corresponds to 33–359 (TNSWVFSPME…VGNLEKWFWN (327 aa)). A glycan (N-linked (GlcNAc...) asparagine) is linked at asparagine 62. The interval 63–168 (ETTILVWVWP…RRDSDIQVPY (106 aa)) is acceptor-binding. Glutamine 75 is a binding site for a beta-D-galactosyl-(1-&gt;4)-N-acetyl-beta-D-glucosaminyl derivative. Cystine bridges form between cysteine 82–cysteine 335, cysteine 91–cysteine 338, and cysteine 190–cysteine 238. An N-linked (GlcNAc...) asparagine glycan is attached at asparagine 101. Position 137 (glutamate 137) interacts with a beta-D-galactosyl-(1-&gt;4)-N-acetyl-beta-D-glucosaminyl derivative. Residue glutamate 137 is the Nucleophile of the active site. Glutamate 137 provides a ligand contact to GDP-beta-L-fucose. The N-linked (GlcNAc...) asparagine glycan is linked to asparagine 153. Positions 168, 192, 194, 195, 202, 226, 241, 246, 252, 255, and 256 each coordinate GDP-beta-L-fucose. Residues 169–326 (GFLTVSTNPF…NWRKDFTVNL (158 aa)) are donor-binding. An acceptor-binding region spans residues 327-359 (PRFWESHACLACDHVKRHQEYKSVGNLEKWFWN).

The protein belongs to the glycosyltransferase 10 family. As to quaternary structure, homodimer. In terms of processing, N-glycosylated with complex-type N-glycans. As to expression, mainly detected in brain and kidney.

It is found in the golgi apparatus. The protein resides in the trans-Golgi network membrane. It localises to the golgi apparatus membrane. The enzyme catalyses a beta-D-galactosyl-(1-&gt;4)-N-acetyl-beta-D-glucosaminyl derivative + GDP-beta-L-fucose = a beta-D-galactosyl-(1-&gt;4)-[alpha-L-fucosyl-(1-&gt;3)]-N-acetyl-beta-D-glucosaminyl derivative + GDP + H(+). The catalysed reaction is an alpha-Neu5Ac-(2-&gt;3)-beta-D-Gal-(1-&gt;4)-beta-D-GlcNAc-(1-&gt;3)-beta-D-Gal-(1-&gt;4)-beta-D-GlcNAc derivative + GDP-beta-L-fucose = an alpha-Neu5Ac-(2-&gt;3)-beta-D-Gal-(1-&gt;4)-beta-D-GlcNAc-(1-&gt;3)-beta-D-Gal-(1-&gt;4)-[alpha-L-Fuc-(1-&gt;3)]-beta-D-GlcNAc derivative + GDP + H(+). It carries out the reaction alpha-N-glycoloylneuraminosyl-(2-&gt;3)-beta-D-galactosyl-(1-&gt;4)-N-acetyl-beta-D-glucosaminyl-(1-&gt;3)-beta-D-galactosyl-(1-&gt;4)-N-acetyl-beta-D-glucosaminyl-(1-&gt;3)-beta-D-galactosyl-(1-&gt;4)-beta-D-glucosyl-(1&lt;-&gt;1')-ceramide + GDP-beta-L-fucose = alpha-N-glycoloylneuraminosyl-(2-&gt;3)-beta-D-galactosyl-(1-&gt;4)-N-acetyl-beta-D-glucosaminyl-(1-&gt;3)-beta-D-galactosyl-(1-&gt;4)-[alpha-L-fucosyl-(1-&gt;3)]-N-acetyl-beta-D-glucosaminyl-(1-&gt;3)-beta-D-galactosyl-(1-&gt;4)-beta-D-glucosyl-(1&lt;-&gt;1')-ceramide + GDP + H(+). It catalyses the reaction alpha-D-galactosyl-(1-&gt;3)-beta-D-galactosyl-(1-&gt;4)-N-acetyl-beta-D-glucosaminyl-(1-&gt;3)-beta-D-galactosyl-(1-&gt;4)-beta-D-glucosyl-(1&lt;-&gt;1')-ceramide + GDP-beta-L-fucose = a neolactoside IV(3)-alpha-Gal,III(3)-alpha-Fuc-nLc4Cer + GDP + H(+). The enzyme catalyses a neolactoside nLc4Cer + GDP-beta-L-fucose = a neolactoside III(3)-alpha-Fuc-nLc4Cer + GDP + H(+). The catalysed reaction is an N-acetyl-alpha-neuraminyl-(2-&gt;3)-beta-D-galactosyl-(1-&gt;4)-N-acetyl-beta-D-glucosaminyl derivative + GDP-beta-L-fucose = an alpha-Neu5Ac-(2-&gt;3)-beta-D-Gal-(1-&gt;4)-[alpha-L-Fuc-(1-&gt;3)]-beta-D-GlcNAc derivative + GDP + H(+). It carries out the reaction beta-D-Gal-(1-&gt;4)-beta-D-GlcNAc-(1-&gt;3)-beta-D-Gal-(1-&gt;4)-D-Glc + GDP-beta-L-fucose = beta-D-Gal-(1-&gt;4)-[alpha-L-Fuc-(1-&gt;3)]-beta-D-GlcNAc-(1-&gt;3)-beta-D-Gal-(1-&gt;4)-D-Glc + GDP + H(+). It catalyses the reaction an alpha-L-Fuc-(1-&gt;2)-beta-D-Gal-(1-&gt;4)-beta-D-GlcNAc derivative + GDP-beta-L-fucose = an alpha-L-Fuc-(1-&gt;2)-beta-D-Gal-(1-&gt;4)-[alpha-L-Fuc-(1-&gt;3)]-beta-D-GlcNAc derivative + GDP + H(+). The protein operates within protein modification; protein glycosylation. Its pathway is glycolipid biosynthesis. With respect to regulation, activated by Mn2+. In terms of biological role, catalyzes alpha(1-&gt;3) linkage of fucosyl moiety transferred from GDP-beta-L-fucose to N-acetyl glucosamine (GlcNAc) within type 2 lactosamine (LacNAc, beta-D-Gal-(1-&gt;4)-beta-D-GlcNAc-) glycan attached to glycolipids and N- or O-linked glycoproteins. Fucosylates distal type 2 LacNAc and its fucosylated (H-type 2 LacNAc) and sialylated (sialyl-type 2 LacNAc) derivatives to form Lewis x (Lex) (CD15) and Lewis y (Ley) antigenic epitopes involved in cell adhesion and differentiation. Generates Lex epitopes in the brain, presumably playing a role in the maintenance of neuronal stemness and neurite outgrowth in progenitor neural cells. Fucosylates the internal type 2 LacNAc unit of the polylactosamine chain to form VIM-2 antigen that serves as recognition epitope for SELE. Can also modify milk oligosaccharides in particular type 2 tetrasaccharide LNnT. The protein is 4-galactosyl-N-acetylglucosaminide 3-alpha-L-fucosyltransferase 9 of Mus musculus (Mouse).